The chain runs to 463 residues: Toxin CaTX-A (463 aa).

An N-terminal signal peptide occupies residues 1–18; the sequence is MSRGYSLHLVLFLVLSTA.

It belongs to the jellyfish toxin family. Type II subfamily. Oligomer. Post-translationally, contains disulfide bonds. It is suggested that CaTX-B is synthesized in the tentacle, is modified (become CaTX-A) and then migrates to the nematocyst.

The protein resides in the secreted. Its subcellular location is the nematocyst. The protein localises to the target cell membrane. Functionally, has potent hemolytic activity. Is lethal to crayfish. Causes cutaneous inflammation in humans. May act as a pore-forming toxin, disrupting normal transmembrane ion concentration gradients in susceptible cells. This Carybdea alata (Hawaiian box jellyfish) protein is Toxin CaTX-A.